The sequence spans 78 residues: Putative antitoxin VapB4 (78 aa).

It belongs to the UPF0330 family.

Its function is as follows. Possibly the antitoxin component of a type II toxin-antitoxin (TA) system. Its cognate toxin is VapC4 (Potential). This chain is Putative antitoxin VapB4 (vapB4), found in Pyrococcus furiosus (strain ATCC 43587 / DSM 3638 / JCM 8422 / Vc1).